The chain runs to 123 residues: Ribosome-binding factor A (123 aa).

It belongs to the RbfA family. In terms of assembly, monomer. Binds 30S ribosomal subunits, but not 50S ribosomal subunits or 70S ribosomes.

Its subcellular location is the cytoplasm. One of several proteins that assist in the late maturation steps of the functional core of the 30S ribosomal subunit. Associates with free 30S ribosomal subunits (but not with 30S subunits that are part of 70S ribosomes or polysomes). Required for efficient processing of 16S rRNA. May interact with the 5'-terminal helix region of 16S rRNA. This chain is Ribosome-binding factor A, found in Neisseria gonorrhoeae (strain ATCC 700825 / FA 1090).